Consider the following 125-residue polypeptide: Phosphoribosyl-AMP cyclohydrolase (125 aa).

Asp74 contributes to the Mg(2+) binding site. Cys75 is a Zn(2+) binding site. The Mg(2+) site is built by Asp76 and Asp78. Residues Cys92 and Cys99 each contribute to the Zn(2+) site.

It belongs to the PRA-CH family. Homodimer. The cofactor is Mg(2+). Requires Zn(2+) as cofactor.

It localises to the cytoplasm. It catalyses the reaction 1-(5-phospho-beta-D-ribosyl)-5'-AMP + H2O = 1-(5-phospho-beta-D-ribosyl)-5-[(5-phospho-beta-D-ribosylamino)methylideneamino]imidazole-4-carboxamide. It participates in amino-acid biosynthesis; L-histidine biosynthesis; L-histidine from 5-phospho-alpha-D-ribose 1-diphosphate: step 3/9. Catalyzes the hydrolysis of the adenine ring of phosphoribosyl-AMP. This Citrifermentans bemidjiense (strain ATCC BAA-1014 / DSM 16622 / JCM 12645 / Bem) (Geobacter bemidjiensis) protein is Phosphoribosyl-AMP cyclohydrolase.